A 215-amino-acid polypeptide reads, in one-letter code: Peroxiredoxin (215 aa).

Positions 3–158 (PLLGDNFPEI…ILRAVKALQV (156 aa)) constitute a Thioredoxin domain. Cys45 serves as the catalytic Cysteine sulfenic acid (-SOH) intermediate. Residue Arg121 coordinates substrate. Cys205 and Cys211 are oxidised to a cystine.

The protein belongs to the peroxiredoxin family. Prx6 subfamily. In terms of assembly, homodecamer. Pentamer of dimers that assemble into a ring structure.

It is found in the cytoplasm. The enzyme catalyses a hydroperoxide + [thioredoxin]-dithiol = an alcohol + [thioredoxin]-disulfide + H2O. Thiol-specific peroxidase that catalyzes the reduction of hydrogen peroxide and organic hydroperoxides to water and alcohols, respectively. Plays a role in cell protection against oxidative stress by detoxifying peroxides. The chain is Peroxiredoxin from Archaeoglobus fulgidus (strain ATCC 49558 / DSM 4304 / JCM 9628 / NBRC 100126 / VC-16).